Reading from the N-terminus, the 125-residue chain is Large-conductance mechanosensitive channel (125 aa).

The next 3 membrane-spanning stretches (helical) occupy residues 19-39, 42-62, and 66-86; these read VGVI…KYII, FLGL…IGNA, and VGSF…VFLM.

Belongs to the MscL family. As to quaternary structure, homopentamer.

The protein resides in the cell membrane. Its function is as follows. Channel that opens in response to stretch forces in the membrane lipid bilayer. May participate in the regulation of osmotic pressure changes within the cell. This Ligilactobacillus salivarius (strain UCC118) (Lactobacillus salivarius) protein is Large-conductance mechanosensitive channel.